Consider the following 309-residue polypeptide: Sodium/potassium-transporting ATPase subunit beta-1 (309 aa).

Topologically, residues 1–45 (MSKNNGKGAKGEFEFPQPAKKQTFSEMIYNPQEGTFFGRTGKSWS) are cytoplasmic. Residues 46–66 (QLLLFYTIFYIVLAALFTICM) form a helical; Signal-anchor for type II membrane protein membrane-spanning segment. Residues 67 to 309 (QGLLSTISDT…GSVTFQILLD (243 aa)) lie on the Extracellular side of the membrane. An N-linked (GlcNAc...) asparagine glycan is attached at N133. Disulfide bonds link C143-C155 and C165-C179. N211 is a glycosylation site (N-linked (GlcNAc...) asparagine). C225 and C282 are joined by a disulfide.

It belongs to the X(+)/potassium ATPases subunit beta family. In terms of assembly, the sodium/potassium-transporting ATPase is composed of a catalytic alpha subunit, an auxiliary non-catalytic beta subunit and an additional regulatory subunit. Interacts with nkain. As to expression, in embryos, it is expressed in the neurons of the CNS and PNS, in Garland cells and posterior spiracles. In adults, it is concentrated in the thorax and abdomen (muscle tissue, digestive system and Malpighian tubules) and weakly expressed in the head. Expression is diffuse in the nervous system.

The protein localises to the cell membrane. In terms of biological role, this is the non-catalytic component of the active enzyme, which catalyzes the hydrolysis of ATP coupled with the exchange of Na(+) and K(+) ions across the plasma membrane. The beta subunit regulates, through assembly of alpha/beta heterodimers, the number of sodium pumps transported to the plasma membrane. The sequence is that of Sodium/potassium-transporting ATPase subunit beta-1 (nrv1) from Drosophila melanogaster (Fruit fly).